Here is a 299-residue protein sequence, read N- to C-terminus: Oxygen-dependent coproporphyrinogen-III oxidase (299 aa).

Residue Ser92 coordinates substrate. 2 residues coordinate Mn(2+): His96 and His106. His106 functions as the Proton donor in the catalytic mechanism. 108 to 110 provides a ligand contact to substrate; the sequence is NVR. Residues His145 and His175 each contribute to the Mn(2+) site. Positions 240 to 275 are important for dimerization; that stretch reads YVEFNLVWDRGTLFGLQTGGRTESILMSMPPLVRWE. Residue 258–260 participates in substrate binding; it reads GGR.

This sequence belongs to the aerobic coproporphyrinogen-III oxidase family. Homodimer. The cofactor is Mn(2+).

It localises to the cytoplasm. The enzyme catalyses coproporphyrinogen III + O2 + 2 H(+) = protoporphyrinogen IX + 2 CO2 + 2 H2O. The protein operates within porphyrin-containing compound metabolism; protoporphyrin-IX biosynthesis; protoporphyrinogen-IX from coproporphyrinogen-III (O2 route): step 1/1. Involved in the heme biosynthesis. Catalyzes the aerobic oxidative decarboxylation of propionate groups of rings A and B of coproporphyrinogen-III to yield the vinyl groups in protoporphyrinogen-IX. The sequence is that of Oxygen-dependent coproporphyrinogen-III oxidase from Escherichia coli O127:H6 (strain E2348/69 / EPEC).